We begin with the raw amino-acid sequence, 326 residues long: Nucleoporin Nup37 (326 aa).

WD repeat units follow at residues 70-117, 122-162, 164-203, and 294-325; these read HHGV…KNEY, GHSD…TAHF, LHSPGMSVCWHPEETFKLMVAEKNGTIRFYDLMAQQAILS, and GSVAVGSGLSWHRTLPLCAVGGDHKLLFWVTE.

Component of the Nup107-160 subcomplex of the nuclear pore complex (NPC). The Nup107-160 subcomplex includes NUP160, NUP133, NUP107, NUP98, NUP85, NUP43, NUP37, SEH1 and SEC13.

It is found in the chromosome. It localises to the centromere. The protein localises to the kinetochore. The protein resides in the nucleus. Its subcellular location is the nuclear pore complex. Component of the Nup107-160 subcomplex of the nuclear pore complex (NPC). The Nup107-160 subcomplex is required for the assembly of a functional NPC. The Nup107-160 subcomplex is also required for normal kinetochore microtubule attachment, mitotic progression and chromosome segregation. In Mus musculus (Mouse), this protein is Nucleoporin Nup37 (Nup37).